The following is a 341-amino-acid chain: Cathepsin B-like cysteine proteinase 1 (341 aa).

Residues 1–19 (MKYLFFALCLYLYQGISEA) form the signal peptide. A propeptide spans 20-88 (EVPAEQIPLE…VEDEELEENN (69 aa)) (activation peptide). Residue N103 is glycosylated (N-linked (GlcNAc...) asparagine). 6 disulfides stabilise this stretch: C104–C133, C116–C160, C152–C218, C153–C156, C189–C222, and C197–C209. The active site involves C119. A glycan (N-linked (GlcNAc...) asparagine) is linked at N202. Catalysis depends on residues H288 and N308.

The protein belongs to the peptidase C1 family.

In terms of biological role, expression of the protease correlates with blood-feeding and suggests a role for the protease in blood digestion. This is Cathepsin B-like cysteine proteinase 1 (CP-1) from Ostertagia ostertagi (Brown stomach worm).